Reading from the N-terminus, the 637-residue chain is Galactofuranosyltransferase GlfT2 (637 aa).

UDP-alpha-D-galactofuranose is bound by residues Arg171, Gln200, Asn229, and Asp256. Residues Asp256 and Asp258 each contribute to the Mn(2+) site. The Proton acceptor role is filled by Asp372. A Mn(2+)-binding site is contributed by His396.

This sequence belongs to the glycosyltransferase 2 family. Homotetramer. Requires Mn(2+) as cofactor. The cofactor is Mg(2+).

Its subcellular location is the cell membrane. The enzyme catalyses beta-D-galactofuranosyl-(1-&gt;5)-beta-D-galactofuranosyl-(1-&gt;4)-alpha-L-rhamnosyl-(1-&gt;3)-N-acetyl-alpha-D-glucosaminyl-diphospho-trans,octa-cis-decaprenol + 28 UDP-alpha-D-galactofuranose = [beta-D-galactofuranosyl-(1-&gt;5)-beta-D-galactofuranosyl-(1-&gt;6)]14-beta-D-galactofuranosyl-(1-&gt;5)-beta-D-galactofuranosyl-(1-&gt;4)-alpha-L-rhamnopyranosyl-(1-&gt;3)-N-acetyl-alpha-D-glucosaminyl-diphospho-trans,octa-cis-decaprenol + 28 UDP + 28 H(+). It participates in cell wall biogenesis; cell wall polysaccharide biosynthesis. Involved in the galactan polymerization of the arabinogalactan (AG) region of the mycolylarabinogalactan-peptidoglycan (mAGP) complex, an essential component of the mycobacteria cell wall. Thus, successively transfers approximately 28 galactofuranosyl (Galf) residues from UDP-galactofuranose (UDP-Galf) onto the galactofuranosyl-galactofuranosyl-rhamnosyl-GlcNAc-diphospho-decaprenol (Galf-Galf-Rha-GlcNAc-PP-C50) acceptor produced by GlfT1, with alternating 1-&gt;5 and 1-&gt;6 links, forming a galactan domain with approximately 30 galactofuranosyl residues. The polypeptide is Galactofuranosyltransferase GlfT2 (Mycobacterium tuberculosis (strain ATCC 25618 / H37Rv)).